The primary structure comprises 412 residues: Gamma-glutamyl phosphate reductase (412 aa).

It belongs to the gamma-glutamyl phosphate reductase family.

The protein resides in the cytoplasm. It catalyses the reaction L-glutamate 5-semialdehyde + phosphate + NADP(+) = L-glutamyl 5-phosphate + NADPH + H(+). Its pathway is amino-acid biosynthesis; L-proline biosynthesis; L-glutamate 5-semialdehyde from L-glutamate: step 2/2. Its function is as follows. Catalyzes the NADPH-dependent reduction of L-glutamate 5-phosphate into L-glutamate 5-semialdehyde and phosphate. The product spontaneously undergoes cyclization to form 1-pyrroline-5-carboxylate. This chain is Gamma-glutamyl phosphate reductase, found in Nitratiruptor sp. (strain SB155-2).